Here is a 237-residue protein sequence, read N- to C-terminus: MSAPKLSLCVEDTGYEIAFAGRSNAGKSSAINSLTNQKQLARASKKPGRTQMINFFSLGNPDQRLVDLPGYGYAAVPEDMKRIWQKELENYLIHRQSLQGLVLLMDIRHPLQHFDTMMLEWAHSRKLFVHILLTKADKLNRGPANQVLLDVKQTLKKMKLSFSIQLFSSLNKQGLEELASVMAGRLNYTLDKTLDFDLDAIPEATEDDLNDELMDQDETSEFNTENIDDHLDQEPKI.

An EngB-type G domain is found at 13 to 188 (TGYEIAFAGR…ASVMAGRLNY (176 aa)). Residues 21–28 (GRSNAGKS), 48–52 (GRTQM), 67–70 (DLPG), 134–137 (TKAD), and 167–169 (FSS) each bind GTP. Residues Ser-28 and Thr-50 each contribute to the Mg(2+) site. A compositionally biased stretch (acidic residues) spans 207 to 220 (DDLNDELMDQDETS). The disordered stretch occupies residues 207–237 (DDLNDELMDQDETSEFNTENIDDHLDQEPKI). Over residues 227–237 (IDDHLDQEPKI) the composition is skewed to basic and acidic residues.

The protein belongs to the TRAFAC class TrmE-Era-EngA-EngB-Septin-like GTPase superfamily. EngB GTPase family. Mg(2+) serves as cofactor.

Functionally, necessary for normal cell division and for the maintenance of normal septation. The protein is Probable GTP-binding protein EngB of Acinetobacter baylyi (strain ATCC 33305 / BD413 / ADP1).